We begin with the raw amino-acid sequence, 158 residues long: SsrA-binding protein (158 aa).

This sequence belongs to the SmpB family.

It localises to the cytoplasm. In terms of biological role, required for rescue of stalled ribosomes mediated by trans-translation. Binds to transfer-messenger RNA (tmRNA), required for stable association of tmRNA with ribosomes. tmRNA and SmpB together mimic tRNA shape, replacing the anticodon stem-loop with SmpB. tmRNA is encoded by the ssrA gene; the 2 termini fold to resemble tRNA(Ala) and it encodes a 'tag peptide', a short internal open reading frame. During trans-translation Ala-aminoacylated tmRNA acts like a tRNA, entering the A-site of stalled ribosomes, displacing the stalled mRNA. The ribosome then switches to translate the ORF on the tmRNA; the nascent peptide is terminated with the 'tag peptide' encoded by the tmRNA and targeted for degradation. The ribosome is freed to recommence translation, which seems to be the essential function of trans-translation. The protein is SsrA-binding protein of Bartonella quintana (strain Toulouse) (Rochalimaea quintana).